A 390-amino-acid chain; its full sequence is Pre-mycofactocin synthase (390 aa).

The FMN hydroxy acid dehydrogenase domain occupies 1 to 383 (MADEWFETVA…RSDDILIPAD (383 aa)). FMN is bound by residues Ser-108, Gln-128, Thr-156, and Lys-254. The active-site Proton acceptor is the His-278. FMN contacts are provided by residues 309–313 (DGGIR) and 332–333 (GR).

It belongs to the FMN-dependent alpha-hydroxy acid dehydrogenase family. FMN serves as cofactor.

The enzyme catalyses 3-amino-5-[(4-hydroxyphenyl)methyl]-4,4-dimethyl-2-pyrrolidin-2-one + O2 + H2O = pre-mycofactocin + H2O2 + NH4(+). In terms of biological role, involved in the biosynthesis of the enzyme cofactor mycofactocin (MFT). Catalyzes the oxidative deamination of AHDP (3-amino-5-[(4-hydroxyphenyl)methyl]-4,4-dimethyl-2-pyrrolidin-2-one), forming an alpha-keto amide moiety on the resulting molecule, which is called pre-mycofactocin (PMFT). This reaction occurs via a 5-[(4-hydroxyphenyl)methyl]-3-imino-4,4-dimethylpyrrolidin-2-one intermediate, which converts to PMFT. The alpha-keto amide moiety is the redox-active center for the redox activity of mycofactocin. This chain is Pre-mycofactocin synthase, found in Mycobacterium ulcerans (strain Agy99).